The primary structure comprises 904 residues: Serine/arginine repetitive matrix protein 1 (904 aa).

M1 is subject to N-acetylmethionine. The interval 1-151 is necessary for DNA and RNA-binding; the sequence is MDAGFFRGTS…ASMKKQDEDK (151 aa). Residues 1–156 are necessary for mRNA 3'-end cleavage and cytoplasmic accumulation; that stretch reads MDAGFFRGTS…QDEDKDKRDK (156 aa). Citrulline is present on R7. A PWI domain is found at 27–126; it reads QLKFAECLEK…AGIPSAFLEL (100 aa). K127 participates in a covalent cross-link: Glycyl lysine isopeptide (Lys-Gly) (interchain with G-Cter in SUMO2). Basic and acidic residues predominate over residues 139–170; it reads EKLASMKKQDEDKDKRDKEEKESSREKRERSR. The tract at residues 139–904 is disordered; it reads EKLASMKKQD…MRKAQVSPQS (766 aa). K140 is modified (N6-acetyllysine). Over residues 171–207 the composition is skewed to basic residues; it reads SPRRRKSRSPSPRRRSSPVRRERKRSHSRSPRHRTKS. The segment covering 214 to 234 has biased composition (basic and acidic residues); that stretch reads PEKKEKTPELPEPSVKVKEPS. Residue T220 is modified to Phosphothreonine. Phosphoserine is present on S227. A Glycyl lysine isopeptide (Lys-Gly) (interchain with G-Cter in SUMO1); alternate cross-link involves residue K231. K231 is covalently cross-linked (Glycyl lysine isopeptide (Lys-Gly) (interchain with G-Cter in SUMO2); alternate). S234 and S240 each carry phosphoserine. T241 carries the phosphothreonine modification. Basic and acidic residues predominate over residues 246–275; that stretch reads KVPKPEPIPEPKEPSPEKNSKKEKEKEKTR. A Glycyl lysine isopeptide (Lys-Gly) (interchain with G-Cter in SUMO2) cross-link involves residue K249. S260 is modified (phosphoserine). 2 stretches are compositionally biased toward basic residues: residues 276-329 and 336-351; these read PRSR…RTPP and PRHR…RRRS. The segment at 300 to 688 is necessary for speckles and matrix localization; that stretch reads RRHRSRSRSY…NKRHSPSPRP (389 aa). Over residues 352-368 the composition is skewed to low complexity; the sequence is SASLSGSSSSSSSSRSR. 4 positions are modified to phosphoserine: S389, S391, S393, and S402. The residue at position 406 (T406) is a Phosphothreonine. S414 carries the post-translational modification Phosphoserine. The residue at position 416 (T416) is a Phosphothreonine. A phosphoserine mark is found at S420, S429, S431, and S436. Polar residues predominate over residues 428 to 438; that stretch reads VSVSPGRTSGK. K447 is covalently cross-linked (Glycyl lysine isopeptide (Lys-Gly) (interchain with G-Cter in SUMO2)). Residues S450 and S452 each carry the phosphoserine modification. Residue K459 forms a Glycyl lysine isopeptide (Lys-Gly) (interchain with G-Cter in SUMO2) linkage. Residues S463 and S465 each carry the phosphoserine modification. K472 participates in a covalent cross-link: Glycyl lysine isopeptide (Lys-Gly) (interchain with G-Cter in SUMO2). S478 is subject to Phosphoserine. Low complexity predominate over residues 478–501; that stretch reads SVQQRRQYRRQNQQSSSDSGSSSS. A compositionally biased stretch (basic and acidic residues) spans 503–518; the sequence is EDERPKRSHVKNGEVG. A phosphoserine mark is found at S524, S526, S528, S530, S532, S549, and S551. Positions 533–560 are enriched in basic residues; the sequence is PRKRQKETSPRGRRRRSPSPPPTRRRRS. Position 555 is a phosphothreonine (T555). Phosphoserine occurs at positions 560 and 562. Basic residues predominate over residues 567–592; sequence PRRRRTPTPPPRRRTPSPPPRRRSPS. Residues T572, T574, and T581 each carry the phosphothreonine modification. Position 583 is a phosphoserine (S583). Residues 593-605 are compositionally biased toward low complexity; it reads PRRYSPPIQRRYS. Y596 carries the post-translational modification Phosphotyrosine. 3 positions are modified to phosphoserine: S597, S605, and S607. T614 is subject to Phosphothreonine. 5 positions are modified to phosphoserine: S616, S626, S628, S636, and S638. The segment covering 621–636 has biased composition (basic residues); it reads PKRRASPSPPPKRRVS. Residues 649-663 show a composition bias toward basic residues; it reads TKRRSPSLSSKHRKG. 7 positions are modified to phosphoserine: S694, S695, S696, S705, S707, S713, and S715. Composition is skewed to low complexity over residues 701–719 and 736–759; these read RRGA…PSTR and AASP…SPEP. T718 is subject to Phosphothreonine. 10 positions are modified to phosphoserine: S738, S740, S748, S752, S754, S756, S769, S773, S775, and S777. Low complexity predominate over residues 771-786; the sequence is VQSQSPSTNWSPAVPV. The residue at position 778 (T778) is a Phosphothreonine. A phosphoserine mark is found at S781 and S791. T793 is modified (phosphothreonine). Residues S795, S797, and S802 each carry the phosphoserine modification. Residues 809-834 show a composition bias toward basic residues; the sequence is KKKKKKKDKKHKKDKKHKKHKKHKKE. A compositionally biased stretch (low complexity) spans 837–866; sequence VAAAAAAAVTPAAIAAATTTLAQEEPVAAP. Residue K869 forms a Glycyl lysine isopeptide (Lys-Gly) (interchain with G-Cter in SUMO2) linkage. T872 carries the phosphothreonine modification. S874 carries the post-translational modification Phosphoserine. Residues 882 to 892 are compositionally biased toward basic and acidic residues; sequence DLEKHLREKAL. At S901 the chain carries Phosphoserine.

This sequence belongs to the splicing factor SR family. In terms of assembly, identified in the spliceosome C complex. Found in a pre-mRNA splicing complex with SFRS4, SFRS5, SNRP70, SNRPA1, SRRM1 and SRRM2. Found in a pre-mRNA exonic splicing enhancer (ESE) complex with SNRP70, SNRPA1, SRRM1 and TRA2B/SFRS10. Component of the minor spliceosome, which splices U12-type introns. Found in a mRNA splicing-dependent exon junction complex (EJC) with DEK, PRPF8, NCBP1, RBM8A, RNPS1, SRRM1 and ALYREF/THOC4. Interacts with DDX39B, CPSF1, RBM8A, RNPS1, and ALYREF/THOC4. Seems to be a compound of RNA export complexes that are released from speckles in a ATP-dependent manner. Phosphorylated on multiple serine and threonine residues by DYRK3 during the G2-to-M transition, after the nuclear-envelope breakdown. Phosphorylation by DYRK3 promotes disassembly of nuclear speckles. In terms of processing, citrullinated by PADI4.

Its subcellular location is the nucleus matrix. The protein resides in the nucleus speckle. Functionally, part of pre- and post-splicing multiprotein mRNP complexes. As a component of the minor spliceosome, involved in the splicing of U12-type introns in pre-mRNAs. Involved in numerous pre-mRNA processing events. Promotes constitutive and exonic splicing enhancer (ESE)-dependent splicing activation by bridging together sequence-specific (SR family proteins, SFRS4, SFRS5 and TRA2B/SFRS10) and basal snRNP (SNRP70 and SNRPA1) factors of the spliceosome. Stimulates mRNA 3'-end cleavage independently of the formation of an exon junction complex. Binds both pre-mRNA and spliced mRNA 20-25 nt upstream of exon-exon junctions. Binds RNA and DNA with low sequence specificity and has similar preference for either double- or single-stranded nucleic acid substrates. In Homo sapiens (Human), this protein is Serine/arginine repetitive matrix protein 1 (SRRM1).